We begin with the raw amino-acid sequence, 601 residues long: NADH-ubiquinone oxidoreductase chain 5 (601 aa).

15 helical membrane passes run 3 to 23 (LIMP…MMSY), 36 to 56 (VTSS…MFLL), 84 to 104 (FFSI…MEFS), 114 to 134 (INQF…LVTA), 140 to 160 (LFIG…WWYG), 171 to 191 (AILY…WLLL), 201 to 221 (IFML…AAAG), 240 to 260 (TPVS…FLLV), 272 to 292 (ILTM…ICAL), 324 to 346 (AFLH…GSII), 365 to 385 (MPFT…MPFL), 404 to 426 (NAWA…TRLI), 456 to 476 (LALG…PLIT), 483 to 503 (LYMK…AMGL), and 581 to 601 (LIKL…MLII).

It belongs to the complex I subunit 5 family.

The protein localises to the mitochondrion inner membrane. The enzyme catalyses a ubiquinone + NADH + 5 H(+)(in) = a ubiquinol + NAD(+) + 4 H(+)(out). Core subunit of the mitochondrial membrane respiratory chain NADH dehydrogenase (Complex I) that is believed to belong to the minimal assembly required for catalysis. Complex I functions in the transfer of electrons from NADH to the respiratory chain. The immediate electron acceptor for the enzyme is believed to be ubiquinone. This is NADH-ubiquinone oxidoreductase chain 5 (MT-ND5) from Dasypus novemcinctus (Nine-banded armadillo).